A 229-amino-acid chain; its full sequence is Potassium/proton antiporter CemA (229 aa).

A run of 4 helical transmembrane segments spans residues 7–27 (FNPL…SFSF), 107–127 (ILNF…YILG), 154–174 (ILLL…ELMI), and 189–209 (IISG…KYLI).

This sequence belongs to the CemA family.

The protein localises to the plastid. It is found in the chloroplast inner membrane. The catalysed reaction is K(+)(in) + H(+)(out) = K(+)(out) + H(+)(in). Its function is as follows. Contributes to K(+)/H(+) antiport activity by supporting proton efflux to control proton extrusion and homeostasis in chloroplasts in a light-dependent manner to modulate photosynthesis. Prevents excessive induction of non-photochemical quenching (NPQ) under continuous-light conditions. Indirectly promotes efficient inorganic carbon uptake into chloroplasts. This is Potassium/proton antiporter CemA from Ranunculus macranthus (Large buttercup).